The primary structure comprises 130 residues: Mitochondrial pyruvate carrier 1 (130 aa).

2 helical membrane passes run 23 to 45 (LKYI…IAAI) and 55 to 77 (ISGP…ALSV).

The protein belongs to the mitochondrial pyruvate carrier (MPC) (TC 2.A.105) family. As to quaternary structure, the functional 150 kDa pyruvate import complex is a heteromer of MPC1 and either MPC2 or MPC3.

The protein resides in the mitochondrion. Its subcellular location is the mitochondrion inner membrane. Its function is as follows. Mediates the uptake of pyruvate into mitochondria. The polypeptide is Mitochondrial pyruvate carrier 1 (Saccharomyces cerevisiae (strain ATCC 204508 / S288c) (Baker's yeast)).